The primary structure comprises 290 residues: Light-independent protochlorophyllide reductase iron-sulfur ATP-binding protein (290 aa).

Residues 10–15 and lysine 39 each bind ATP; that span reads GIGKST. Serine 14 contributes to the Mg(2+) binding site. Cysteine 95 and cysteine 129 together coordinate [4Fe-4S] cluster. 180–181 serves as a coordination point for ATP; that stretch reads NR.

The protein belongs to the NifH/BchL/ChlL family. As to quaternary structure, homodimer. Protochlorophyllide reductase is composed of three subunits; ChlL, ChlN and ChlB. [4Fe-4S] cluster is required as a cofactor.

It is found in the plastid. Its subcellular location is the chloroplast. It catalyses the reaction chlorophyllide a + oxidized 2[4Fe-4S]-[ferredoxin] + 2 ADP + 2 phosphate = protochlorophyllide a + reduced 2[4Fe-4S]-[ferredoxin] + 2 ATP + 2 H2O. Its pathway is porphyrin-containing compound metabolism; chlorophyll biosynthesis (light-independent). Its function is as follows. Component of the dark-operative protochlorophyllide reductase (DPOR) that uses Mg-ATP and reduced ferredoxin to reduce ring D of protochlorophyllide (Pchlide) to form chlorophyllide a (Chlide). This reaction is light-independent. The L component serves as a unique electron donor to the NB-component of the complex, and binds Mg-ATP. The sequence is that of Light-independent protochlorophyllide reductase iron-sulfur ATP-binding protein from Porphyra purpurea (Red seaweed).